Here is a 74-residue protein sequence, read N- to C-terminus: uncharacterized protein (74 aa).

This is an uncharacterized protein from Methanocaldococcus jannaschii (strain ATCC 43067 / DSM 2661 / JAL-1 / JCM 10045 / NBRC 100440) (Methanococcus jannaschii).